We begin with the raw amino-acid sequence, 827 residues long: Glycerol-3-phosphate acyltransferase (827 aa).

An HXXXXD motif motif is present at residues 309–314 (CHRSHI).

This sequence belongs to the GPAT/DAPAT family.

It localises to the cell inner membrane. It carries out the reaction sn-glycerol 3-phosphate + an acyl-CoA = a 1-acyl-sn-glycero-3-phosphate + CoA. Its pathway is phospholipid metabolism; CDP-diacylglycerol biosynthesis; CDP-diacylglycerol from sn-glycerol 3-phosphate: step 1/3. The protein is Glycerol-3-phosphate acyltransferase of Ectopseudomonas mendocina (strain ymp) (Pseudomonas mendocina).